The following is a 441-amino-acid chain: Ribosomal protein uS12 methylthiotransferase RimO (441 aa).

In terms of domain architecture, MTTase N-terminal spans 7–117; the sequence is PKVSFVSLGC…VLDAVHRALP (111 aa). C16, C52, C81, C148, C152, and C155 together coordinate [4Fe-4S] cluster. In terms of domain architecture, Radical SAM core spans 134–371; that stretch reads LTPRHYAYLK…MARQQKISAR (238 aa). Residues 374-440 form the TRAM domain; sequence KRKVGTRQQV…AYDLHGSVAG (67 aa).

Belongs to the methylthiotransferase family. RimO subfamily. It depends on [4Fe-4S] cluster as a cofactor.

It is found in the cytoplasm. The catalysed reaction is L-aspartate(89)-[ribosomal protein uS12]-hydrogen + (sulfur carrier)-SH + AH2 + 2 S-adenosyl-L-methionine = 3-methylsulfanyl-L-aspartate(89)-[ribosomal protein uS12]-hydrogen + (sulfur carrier)-H + 5'-deoxyadenosine + L-methionine + A + S-adenosyl-L-homocysteine + 2 H(+). Functionally, catalyzes the methylthiolation of an aspartic acid residue of ribosomal protein uS12. This chain is Ribosomal protein uS12 methylthiotransferase RimO, found in Rhodopseudomonas palustris (strain BisB18).